Reading from the N-terminus, the 134-residue chain is Arsenate reductase (134 aa).

Residues Cys-11, Cys-83, and Cys-90 each act as nucleophile in the active site. Intrachain disulfides connect Cys-11–Cys-83 and Cys-83–Cys-90.

Belongs to the low molecular weight phosphotyrosine protein phosphatase family. Thioredoxin-coupled ArsC subfamily.

It localises to the cytoplasm. The enzyme catalyses arsenate + [thioredoxin]-dithiol + H(+) = arsenite + [thioredoxin]-disulfide + H2O. Functionally, catalyzes the reduction of arsenate [As(V)] to arsenite [As(III)]. The protein is Arsenate reductase of Bacillus cereus (strain ZK / E33L).